The following is a 115-amino-acid chain: NADH-ubiquinone oxidoreductase chain 3 (115 aa).

A run of 3 helical transmembrane segments spans residues Leu5 to Pro25, Phe55 to Leu75, and Leu86 to Trp106.

The protein belongs to the complex I subunit 3 family. As to quaternary structure, core subunit of respiratory chain NADH dehydrogenase (Complex I) which is composed of 45 different subunits. Interacts with TMEM186. Interacts with TMEM242.

It is found in the mitochondrion inner membrane. It carries out the reaction a ubiquinone + NADH + 5 H(+)(in) = a ubiquinol + NAD(+) + 4 H(+)(out). Functionally, core subunit of the mitochondrial membrane respiratory chain NADH dehydrogenase (Complex I) which catalyzes electron transfer from NADH through the respiratory chain, using ubiquinone as an electron acceptor. Essential for the catalytic activity of complex I. This Avahi cleesei (Cleese's woolly lemur) protein is NADH-ubiquinone oxidoreductase chain 3.